We begin with the raw amino-acid sequence, 309 residues long: Tagatose-6-phosphate kinase (309 aa).

This sequence belongs to the carbohydrate kinase PfkB family. LacC subfamily.

It catalyses the reaction D-tagatofuranose 6-phosphate + ATP = D-tagatofuranose 1,6-bisphosphate + ADP + H(+). It participates in carbohydrate metabolism; D-tagatose 6-phosphate degradation; D-glyceraldehyde 3-phosphate and glycerone phosphate from D-tagatose 6-phosphate: step 1/2. In Streptococcus pneumoniae (strain Taiwan19F-14), this protein is Tagatose-6-phosphate kinase.